We begin with the raw amino-acid sequence, 67 residues long: DNA-directed RNA polymerase subunit omega (67 aa).

The protein belongs to the RNA polymerase subunit omega family. As to quaternary structure, the RNAP catalytic core consists of 2 alpha, 1 beta, 1 beta' and 1 omega subunit. When a sigma factor is associated with the core the holoenzyme is formed, which can initiate transcription.

It carries out the reaction RNA(n) + a ribonucleoside 5'-triphosphate = RNA(n+1) + diphosphate. Functionally, promotes RNA polymerase assembly. Latches the N- and C-terminal regions of the beta' subunit thereby facilitating its interaction with the beta and alpha subunits. The sequence is that of DNA-directed RNA polymerase subunit omega from Burkholderia multivorans (strain ATCC 17616 / 249).